We begin with the raw amino-acid sequence, 150 residues long: C-type lectin mosGCTL-7 (150 aa).

A signal peptide spans 1 to 17 (MQLVHVLVVLLSVVAHA). Residues 18 to 140 (KKFFIPNLKA…CRGFKAYIVC (123 aa)) enclose the C-type lectin domain. The N-linked (GlcNAc...) asparagine glycan is linked to N67. Cysteines 111 and 131 form a disulfide.

As to quaternary structure, interacts with putative receptor-type tyrosine-protein phosphatase mosPTP-1; the interaction probably mediates the recruitment of Japanese encephalitis virus particles in complex with C-type lectin mosGCTL-7 to the cell surface. In terms of assembly, (Microbial infection) Interacts with envelope protein E (glycosylated) of Japanese encephalitis virus in a calcium-dependent manner.

The protein localises to the secreted. Its function is as follows. Carbohydrate-binding protein. Functionally, (Microbial infection) Facilitates Japanese encephalitis virus infection in mosquitoes probably via capturing viral particles and presenting them to a ligand on the cell surface, thereby facilitating viral entry. The sequence is that of C-type lectin mosGCTL-7 from Aedes aegypti (Yellowfever mosquito).